The chain runs to 913 residues: Anoctamin-5 (913 aa).

The Cytoplasmic segment spans residues 1 to 299 (MGDPDLLEVL…DLIKNYYGEK (299 aa)). Residues 300–320 (IGIYFVFLGFYTEMLFFAAVV) traverse the membrane as a helical segment. Over 321–380 (GLACFIYGLLSMEHNTSSTEICDPEIGGQMIMCPLCDQVCDYWRLNSTCLASKFSHLFDN) the chain is Extracellular. Residues asparagine 335, asparagine 366, and asparagine 380 are each glycosylated (N-linked (GlcNAc...) asparagine). A helical membrane pass occupies residues 381–401 (ESTVFFAIFMGIWVTLFLEFW). Residues 402 to 462 (KQRQARLEYE…YTRIPWYFLS (61 aa)) are Cytoplasmic-facing. A helical transmembrane segment spans residues 463–483 (GATVTLWMSLVVTSMVAVIVY). Residues 484–511 (RLSVFATFASFMESDASLKQVKSFLTPQ) lie on the Extracellular side of the membrane. Residues 512-532 (ITTSLTGSCLNFIVILILNFF) traverse the membrane as a helical segment. Residues 533-557 (YEKISAWITKMEIPRTYQEYESSLT) are Cytoplasmic-facing. A helical transmembrane segment spans residues 558 to 578 (LKMFLFQFVNFYSSCFYVAFF). Residues 579-679 (KGKFVGYPGK…FYEYLETVTQ (101 aa)) lie on the Extracellular side of the membrane. Residues 680-700 (FGFVTLFVASFPLAPLLALIN) traverse the membrane as a helical segment. The Cytoplasmic segment spans residues 701–732 (NIVEIRVDAWKLTTQYRRTVASKAHSIGVWQD). A helical membrane pass occupies residues 733–753 (ILYGMAVLSVATNAFIVAFTS). Residues 754–834 (DIIPRLVYYY…FWHVLAAKMT (81 aa)) are Extracellular-facing. N-linked (GlcNAc...) asparagine glycosylation is found at asparagine 768, asparagine 778, and asparagine 791. A helical membrane pass occupies residues 835 to 855 (FIIVMEHVVFLVKFLLAWMIP). Residues 856–913 (DVPKDVVERIKREKLMTIKILHDFELNKLKENLGINSNEFAKHVMIEENKAQLAKSTL) are Cytoplasmic-facing.

It belongs to the anoctamin family. In terms of tissue distribution, highly expressed in brain, heart, kidney, lung, and skeletal muscle. Weakly expressed in bone marrow, fetal liver, placenta, spleen, thymus, osteoblasts and periodontal ligament cells.

It is found in the endoplasmic reticulum membrane. The protein localises to the cell membrane. Functionally, plays a role in plasma membrane repair in a process involving annexins. Does not exhibit calcium-activated chloride channel (CaCC) activity. This is Anoctamin-5 (ANO5) from Homo sapiens (Human).